The primary structure comprises 725 residues: Catalase-peroxidase (725 aa).

Positions 88 to 211 form a cross-link, tryptophyl-tyrosyl-methioninium (Trp-Tyr) (with M-237); that stretch reads WHSAGTYRIQ…LAASEMGLIY (124 aa). The active-site Proton acceptor is the His-89. Positions 211 to 237 form a cross-link, tryptophyl-tyrosyl-methioninium (Tyr-Met) (with W-88); the sequence is YVNPEGPGREPDPLKAAQQIRETFKRM. His-252 serves as a coordination point for heme b.

Belongs to the peroxidase family. Peroxidase/catalase subfamily. In terms of assembly, homodimer or homotetramer. Requires heme b as cofactor. In terms of processing, formation of the three residue Trp-Tyr-Met cross-link is important for the catalase, but not the peroxidase activity of the enzyme.

The enzyme catalyses H2O2 + AH2 = A + 2 H2O. The catalysed reaction is 2 H2O2 = O2 + 2 H2O. Functionally, bifunctional enzyme with both catalase and broad-spectrum peroxidase activity. The protein is Catalase-peroxidase of Symbiobacterium thermophilum (strain DSM 24528 / JCM 14929 / IAM 14863 / T).